Reading from the N-terminus, the 41-residue chain is Antimicrobial protein PN-AMP1 (41 aa).

A Pyrrolidone carboxylic acid modification is found at Q1. One can recognise a Chitin-binding type-1 domain in the interval 1–41; it reads QQCGRQASGRLCGNRLCCSQWGYCGSTASYCGAGCQSQCRS. Disulfide bonds link C3–C18, C12–C24, C17–C31, and C35–C39.

Its function is as follows. Chitin-binding protein with a defensive function against numerous chitin containing fungal pathogens. It is also an inhibitor of Gram-positive bacteria such as B.subtilis. The polypeptide is Antimicrobial protein PN-AMP1 (Ipomoea nil (Japanese morning glory)).